We begin with the raw amino-acid sequence, 322 residues long: Methionyl-tRNA formyltransferase (322 aa).

Residue 112-115 (SLLP) participates in (6S)-5,6,7,8-tetrahydrofolate binding.

It belongs to the Fmt family.

It catalyses the reaction L-methionyl-tRNA(fMet) + (6R)-10-formyltetrahydrofolate = N-formyl-L-methionyl-tRNA(fMet) + (6S)-5,6,7,8-tetrahydrofolate + H(+). Functionally, attaches a formyl group to the free amino group of methionyl-tRNA(fMet). The formyl group appears to play a dual role in the initiator identity of N-formylmethionyl-tRNA by promoting its recognition by IF2 and preventing the misappropriation of this tRNA by the elongation apparatus. This Synechococcus sp. (strain JA-2-3B'a(2-13)) (Cyanobacteria bacterium Yellowstone B-Prime) protein is Methionyl-tRNA formyltransferase.